The following is a 545-amino-acid chain: CTP synthase (545 aa).

The interval 1–264 (MQYIVVTGGV…ITRLSKLLNM (264 aa)) is amidoligase domain. Residue serine 12 participates in CTP binding. Serine 12 provides a ligand contact to UTP. ATP is bound at residue 13-18 (GLGKGT). Tyrosine 53 is an L-glutamine binding site. Aspartate 70 provides a ligand contact to ATP. Mg(2+) contacts are provided by aspartate 70 and glutamate 140. CTP-binding positions include 147 to 149 (DIE), 185 to 190 (KTKPTQ), and arginine 221. Residues 185–190 (KTKPTQ) and arginine 221 contribute to the UTP site. Positions 294–527 (YVDLHDAYIS…VEQALIFKHR (234 aa)) constitute a Glutamine amidotransferase type-1 domain. Position 347 (glycine 347) interacts with L-glutamine. The active-site Nucleophile; for glutamine hydrolysis is cysteine 374. L-glutamine is bound by residues 375–378 (LGFQ), glutamate 398, and arginine 455. Residues histidine 500 and glutamate 502 contribute to the active site.

It belongs to the CTP synthase family. In terms of assembly, homotetramer.

The enzyme catalyses UTP + L-glutamine + ATP + H2O = CTP + L-glutamate + ADP + phosphate + 2 H(+). It catalyses the reaction L-glutamine + H2O = L-glutamate + NH4(+). The catalysed reaction is UTP + NH4(+) + ATP = CTP + ADP + phosphate + 2 H(+). Its pathway is pyrimidine metabolism; CTP biosynthesis via de novo pathway; CTP from UDP: step 2/2. Its activity is regulated as follows. Allosterically activated by GTP, when glutamine is the substrate; GTP has no effect on the reaction when ammonia is the substrate. The allosteric effector GTP functions by stabilizing the protein conformation that binds the tetrahedral intermediate(s) formed during glutamine hydrolysis. Inhibited by the product CTP, via allosteric rather than competitive inhibition. Catalyzes the ATP-dependent amination of UTP to CTP with either L-glutamine or ammonia as the source of nitrogen. Regulates intracellular CTP levels through interactions with the four ribonucleotide triphosphates. The polypeptide is CTP synthase (Thermoplasma acidophilum (strain ATCC 25905 / DSM 1728 / JCM 9062 / NBRC 15155 / AMRC-C165)).